The chain runs to 341 residues: Glycerol-1-phosphate dehydrogenase [NAD(P)+] (341 aa).

Residues 81 to 85 (GKAID) and 103 to 106 (TTAS) contribute to the NAD(+) site. Residue aspartate 108 participates in substrate binding. An NAD(+)-binding site is contributed by serine 112. Aspartate 151 lines the substrate pocket. 2 residues coordinate Zn(2+): aspartate 151 and histidine 232. Histidine 236 is a binding site for substrate. Position 253 (histidine 253) interacts with Zn(2+).

It belongs to the glycerol-1-phosphate dehydrogenase family. Zn(2+) serves as cofactor.

The protein localises to the cytoplasm. The enzyme catalyses sn-glycerol 1-phosphate + NAD(+) = dihydroxyacetone phosphate + NADH + H(+). It catalyses the reaction sn-glycerol 1-phosphate + NADP(+) = dihydroxyacetone phosphate + NADPH + H(+). The protein operates within membrane lipid metabolism; glycerophospholipid metabolism. Catalyzes the NAD(P)H-dependent reduction of dihydroxyacetonephosphate (DHAP or glycerone phosphate) to glycerol 1-phosphate (G1P). The G1P thus generated is used as the glycerophosphate backbone of phospholipids in the cellular membranes of Archaea. The polypeptide is Glycerol-1-phosphate dehydrogenase [NAD(P)+] (Methanococcus aeolicus (strain ATCC BAA-1280 / DSM 17508 / OCM 812 / Nankai-3)).